Consider the following 89-residue polypeptide: Probable Fe(2+)-trafficking protein (89 aa).

The protein belongs to the Fe(2+)-trafficking protein family.

Its function is as follows. Could be a mediator in iron transactions between iron acquisition and iron-requiring processes, such as synthesis and/or repair of Fe-S clusters in biosynthetic enzymes. The chain is Probable Fe(2+)-trafficking protein from Acinetobacter baumannii (strain SDF).